Here is a 207-residue protein sequence, read N- to C-terminus: LexA repressor (207 aa).

A DNA-binding region (H-T-H motif) is located at residues 28–48 (VREIGEAVGLASSSTVHGHLS). Residues serine 129 and lysine 167 each act as for autocatalytic cleavage activity in the active site.

The protein belongs to the peptidase S24 family. In terms of assembly, homodimer.

The enzyme catalyses Hydrolysis of Ala-|-Gly bond in repressor LexA.. Its function is as follows. Represses a number of genes involved in the response to DNA damage (SOS response), including recA and lexA. In the presence of single-stranded DNA, RecA interacts with LexA causing an autocatalytic cleavage which disrupts the DNA-binding part of LexA, leading to derepression of the SOS regulon and eventually DNA repair. In Halalkalibacterium halodurans (strain ATCC BAA-125 / DSM 18197 / FERM 7344 / JCM 9153 / C-125) (Bacillus halodurans), this protein is LexA repressor.